Here is a 1317-residue protein sequence, read N- to C-terminus: uncharacterized protein (1317 aa).

It belongs to the oxoprolinase family.

This is an uncharacterized protein from Schizosaccharomyces pombe (strain 972 / ATCC 24843) (Fission yeast).